Consider the following 106-residue polypeptide: Iron-sulfur cluster assembly protein CyaY (106 aa).

This sequence belongs to the frataxin family.

Involved in iron-sulfur (Fe-S) cluster assembly. May act as a regulator of Fe-S biogenesis. This chain is Iron-sulfur cluster assembly protein CyaY, found in Salmonella paratyphi B (strain ATCC BAA-1250 / SPB7).